The sequence spans 289 residues: Xyloglucan endotransglucosylase/hydrolase protein 15 (289 aa).

An N-terminal signal peptide occupies residues 1–25 (MGPSSSLTTIVATVLLVTLFGSAYA). Residues 26 to 216 (SNFFDEFDLT…WSKAPFTAYY (191 aa)) form the GH16 domain. The active-site Nucleophile is the E102. E106 serves as the catalytic Proton donor. E106 lines the xyloglucan pocket. N110 carries an N-linked (GlcNAc...) asparagine glycan. Xyloglucan contacts are provided by residues 119–121 (HTN), 129–131 (DRE), 195–196 (DW), and G200. 2 disulfide bridges follow: C224–C230 and C270–C284. Residue R275 participates in xyloglucan binding.

The protein belongs to the glycosyl hydrolase 16 family. XTH group 2 subfamily. In terms of processing, contains at least one intrachain disulfide bond essential for its enzymatic activity. In terms of tissue distribution, strongly expressed in roots, hypocotyls and cotyledons. Aslo detected in inflorescence stems and in the carpels and styles in flowers.

Its subcellular location is the secreted. The protein localises to the cell wall. The protein resides in the extracellular space. It is found in the apoplast. The catalysed reaction is breaks a beta-(1-&gt;4) bond in the backbone of a xyloglucan and transfers the xyloglucanyl segment on to O-4 of the non-reducing terminal glucose residue of an acceptor, which can be a xyloglucan or an oligosaccharide of xyloglucan.. It catalyses the reaction xyloglucan + H2O = xyloglucan oligosaccharides.. Catalyzes xyloglucan endohydrolysis (XEH) and/or endotransglycosylation (XET). Cleaves and religates xyloglucan polymers, an essential constituent of the primary cell wall, and thereby participates in cell wall construction of growing tissues. Has a high XET activity, but little or no XEH activity in vitro. Acceptor preferences are XXXGol &gt; XLLGol = XLFGol &gt; XXLGol &gt; XXFGol. In Arabidopsis thaliana (Mouse-ear cress), this protein is Xyloglucan endotransglucosylase/hydrolase protein 15.